We begin with the raw amino-acid sequence, 204 residues long: TPR repeat-containing protein RHE_CH03534.1 (204 aa).

The first 29 residues, 1 to 29, serve as a signal peptide directing secretion; it reads MSAMRLFALTSAMLPLAFILSTSPFPATA. TPR repeat units follow at residues 84 to 117, 118 to 151, and 153 to 185; these read INLL…KPDY, AESW…EPRH, and GALS…YPAD.

This Rhizobium etli (strain ATCC 51251 / DSM 11541 / JCM 21823 / NBRC 15573 / CFN 42) protein is TPR repeat-containing protein RHE_CH03534.1.